The primary structure comprises 391 residues: Alkanesulfonate monooxygenase (391 aa).

This sequence belongs to the SsuD family.

The enzyme catalyses an alkanesulfonate + FMNH2 + O2 = an aldehyde + FMN + sulfite + H2O + 2 H(+). In terms of biological role, catalyzes the desulfonation of aliphatic sulfonates. The sequence is that of Alkanesulfonate monooxygenase from Rhodopseudomonas palustris (strain TIE-1).